A 260-amino-acid chain; its full sequence is Triosephosphate isomerase (260 aa).

A substrate-binding site is contributed by 11-13 (NWK). Histidine 103 (electrophile) is an active-site residue. The Proton acceptor role is filled by glutamate 175. Substrate contacts are provided by residues glycine 181, serine 220, and 241-242 (GG).

This sequence belongs to the triosephosphate isomerase family. In terms of assembly, homodimer.

The protein localises to the cytoplasm. The catalysed reaction is D-glyceraldehyde 3-phosphate = dihydroxyacetone phosphate. Its pathway is carbohydrate biosynthesis; gluconeogenesis. It functions in the pathway carbohydrate degradation; glycolysis; D-glyceraldehyde 3-phosphate from glycerone phosphate: step 1/1. Functionally, involved in the gluconeogenesis. Catalyzes stereospecifically the conversion of dihydroxyacetone phosphate (DHAP) to D-glyceraldehyde-3-phosphate (G3P). In Shewanella sp. (strain MR-4), this protein is Triosephosphate isomerase.